The chain runs to 383 residues: MFEPMELTNDAVIKVIGVGGGGGNAVEHMVRERIEGVEFFAVNTDAQALRKTAVGQTIQIGSGITKGLGAGANPEVGRNAADEDRDALRAALEGADMVFIAAGMGGGTGTGAAPVVAEVAKDLGILTVAVVTKPFNFEGKKRMAFAEQGITELSKHVDSLITIPNDKLLKVLGRGISLLDAFGAANDVLKGAVQGIAELITRPGLMNVDFADVRTVMSEMGYAMMGSGVASGENRAEEAAEMAISSPLLEDIDLSGARGVLVNITAGFDLGLVEVETVGNTIRAFASGNATVVIGTSLDPDMNDELRVTVVATGIGMDKRPEITLVTNKQVQQPVMDRYQQHGMAPLTQEQKPVAKVVNDNAPQTAKEPDYLDIPAFVRKQAD.

GTP contacts are provided by residues 20 to 24 (GGGGN), 107 to 109 (GTG), Glu-138, Arg-142, and Asn-186.

It belongs to the FtsZ family. In terms of assembly, homodimer. Polymerizes to form a dynamic ring structure in a strictly GTP-dependent manner. Interacts directly with several other division proteins.

The protein resides in the cytoplasm. In terms of biological role, essential cell division protein that forms a contractile ring structure (Z ring) at the future cell division site. The regulation of the ring assembly controls the timing and the location of cell division. One of the functions of the FtsZ ring is to recruit other cell division proteins to the septum to produce a new cell wall between the dividing cells. Binds GTP and shows GTPase activity. The chain is Cell division protein FtsZ from Shigella flexneri.